Consider the following 208-residue polypeptide: MIPGILGTKLGMTQIFDESGLAIPVTVIKAGPCILTQIKTQESDSYQAIQIGFSEVKESSLNKPLLGHLKKSQAPALKHLKEYRVKSVEGLEVAQKITLDSFEVGKTVSVSGKTIGKGFAGTVRRYSFTRGPMTHGSKNHREPGSIGQGSTPGKVHKGKKMAGRLGGKQSTIKNLEIVHVNTDNNILVVKGAVPGKKGNILSIQQEEI.

Residues T129 to L165 are disordered.

It belongs to the universal ribosomal protein uL3 family. In terms of assembly, part of the 50S ribosomal subunit.

Its subcellular location is the plastid. The protein resides in the chloroplast. Its function is as follows. One of the primary rRNA binding proteins, it binds directly near the 3'-end of the 23S rRNA, where it nucleates assembly of the 50S subunit. In Rhodomonas salina (Cryptomonas salina), this protein is Large ribosomal subunit protein uL3c (rpl3).